A 195-amino-acid polypeptide reads, in one-letter code: Imidazoleglycerol-phosphate dehydratase (195 aa).

This sequence belongs to the imidazoleglycerol-phosphate dehydratase family.

It is found in the cytoplasm. The enzyme catalyses D-erythro-1-(imidazol-4-yl)glycerol 3-phosphate = 3-(imidazol-4-yl)-2-oxopropyl phosphate + H2O. Its pathway is amino-acid biosynthesis; L-histidine biosynthesis; L-histidine from 5-phospho-alpha-D-ribose 1-diphosphate: step 6/9. The polypeptide is Imidazoleglycerol-phosphate dehydratase (Paracoccus denitrificans (strain Pd 1222)).